A 388-amino-acid chain; its full sequence is Leucine aminopeptidase 1 (388 aa).

Positions 1–19 are cleaved as a signal peptide; sequence MKLPALLILGVAASTMVLA. The propeptide occupies 20-88; it reads AIAPDQVPLN…LPKVFPTPAV (69 aa). 5 N-linked (GlcNAc...) asparagine glycosylation sites follow: asparagine 96, asparagine 119, asparagine 149, asparagine 164, and asparagine 181. Positions 189 and 207 each coordinate Zn(2+). N-linked (GlcNAc...) asparagine glycosylation occurs at asparagine 232. Zn(2+) is bound by residues glutamate 246 and aspartate 273. A disulfide bridge connects residues cysteine 322 and cysteine 326. Residue histidine 355 coordinates Zn(2+).

The protein belongs to the peptidase M28 family. M28E subfamily. As to quaternary structure, monomer. It depends on Zn(2+) as a cofactor.

It localises to the secreted. Extracellular aminopeptidase that allows assimilation of proteinaceous substrates. This is Leucine aminopeptidase 1 (LAP1) from Paracoccidioides brasiliensis (strain Pb03).